We begin with the raw amino-acid sequence, 271 residues long: ATP synthase subunit a (271 aa).

Transmembrane regions (helical) follow at residues 31 to 51, 89 to 109, 124 to 144, 186 to 206, and 216 to 236; these read WDTI…GLYM, FVAP…WIGV, DINL…IVSL, IFSG…VLWL, and LGVG…YYAF. The segment at 247–271 is disordered; sequence DEHADGGDSSSRQASPTPLPAGQVR.

It belongs to the ATPase A chain family. As to quaternary structure, F-type ATPases have 2 components, CF(1) - the catalytic core - and CF(0) - the membrane proton channel. CF(1) has five subunits: alpha(3), beta(3), gamma(1), delta(1), epsilon(1). CF(0) has three main subunits: a(1), b(2) and c(9-12). The alpha and beta chains form an alternating ring which encloses part of the gamma chain. CF(1) is attached to CF(0) by a central stalk formed by the gamma and epsilon chains, while a peripheral stalk is formed by the delta and b chains.

Its subcellular location is the cell membrane. In terms of biological role, key component of the proton channel; it plays a direct role in the translocation of protons across the membrane. In Acidothermus cellulolyticus (strain ATCC 43068 / DSM 8971 / 11B), this protein is ATP synthase subunit a.